Consider the following 352-residue polypeptide: Ion-translocating oxidoreductase complex subunit D (352 aa).

The next 5 membrane-spanning stretches (helical) occupy residues 20–40 (IMLLVLLAAIPGIATQLWFFG), 42–62 (GTLVQIILAVISALSAEALVL), 68–88 (PIAAILKDNSALLTGLLLAVS), 89–109 (IPPLAPWWMVVLGTVFAVIIA), and 123–143 (PAMIGYVVLLISFPVQMTNWL). Thr-187 is subject to FMN phosphoryl threonine. 5 helical membrane passes run 217–237 (GAGWQWVNLAWLAGGVWLLAI), 244–264 (IPVSFLVSLALCATLGWLFAP), 267–287 (LASPQIHMLSGATMLGAFFIL), 301–321 (LIFGALAGVLVWLIRSFGGYP), and 322–342 (DGVAFAVLLANITVPLIDYYT).

It belongs to the NqrB/RnfD family. The complex is composed of six subunits: RsxA, RsxB, RsxC, RsxD, RsxE and RsxG. FMN serves as cofactor.

It localises to the cell inner membrane. Its function is as follows. Part of a membrane-bound complex that couples electron transfer with translocation of ions across the membrane. Required to maintain the reduced state of SoxR. The chain is Ion-translocating oxidoreductase complex subunit D from Escherichia fergusonii (strain ATCC 35469 / DSM 13698 / CCUG 18766 / IAM 14443 / JCM 21226 / LMG 7866 / NBRC 102419 / NCTC 12128 / CDC 0568-73).